We begin with the raw amino-acid sequence, 1462 residues long: MSTVVNRRSSHQFDSPSNHLDHSSSMNVDKVVQSVTNATKRLSQISTNTNNSNKKRKTQNKIGPWKLGRTLGRGSTGRVRLAKNTTTGQLAAVKIVPKSNFKKLENPKYKRSKEDATRLPYGIEREIIIMKLISHPNIMGLYDVWENKNDLYLILEYIEGGELFDYLIKRGKLQEYEAINYFKQIINGINYLHQFNICHRDLKPENLLLDFNKNIKIADFGMAALEVKEKLLETSCGSPHYASPEIVAGKNYHGAPSDIWSCGIILFALLTGHLPFDDENIRKLLLKVQSGKFNMPPELSFEAKDLITKMLKVNPRERITIDAILTHPLLAKYPEPTVSYSSTTTLDINSINIKQIESVDKIDKEILKNLSVLFHNCDEKTIISRLLSPNRCPEKMFYYLLMKYRNEHLSNSNSFNSSNDVDSARSLPRSTSYVKTTVTDHATGEKHTTVKKIQQSSSIYSNRSLLKKSTSAKGNVLSNITNRPNTPKQFSASSSFNKKKALHSKTQIYASRSRNASSRSLKSNSSTGRNGNNASVTSVNKIPEITGATVLQPIPSMAMNRGDEQQNKTKKNLTGTFGNKSLLNFQLICEEVFENDKENSKPVSKTPVSQLPPPPPPPIETPTSRTNSVKRGKTWSLARRERELAEQVRQRNEARENKLKAEELARKELEQEKKRIAEEKKRLEQQERELDEKQKLQEKQKAALEKLQKHQSAHDFEGLFASNRRSVTDMAPSSGMSSLDPRAHMVSRANTIGSPNLSSSSVNIDENASKVLHKFGIDVAPSPKRFSRASKTSTSKNLSSFLAPTVSRNLSSQLKTSSSKNLAGYLHGTTDTNGSAIAAKKKDNSTNKALTIEEFNAKERTSMSPSISKASVNKRNSNQSSYYRSMFSDNGNDDNVTKVRTRESHLSVQEEEEMDMENAIDEDISLIPNPRFSRFSFGGLLGSNTVANEEGDWTIMNSTLNHSNTVVRRTHNKSSTMLGLGIKMRDTTTIKEDEEFEDEKPFISVPSSEDDEGNTHKNKRGGLRDSGNYDFDEEHSVASTANTEYSDVASQGQQRPGSHTIHQLETELSNFDLLSYRVADIGKVNKHKPSIVDSKETLLKNHSSDEATIEVKEDNNEHDFNDKIKQHYDDNGDSEEDDEDEDEEEEDDDDDDDARSSFEARPHSHNYSLAEITSESPVGGGYESPSIANDFKKSRHSTGIFSTTQFPRSPYVVNNNGDSNKDENSQQQTKHMLNDGHKGLITSPVQDTFGSKKPVESNSLFRRLSLNPNRAAPKAPAPPPPSAPTSSAAKANISQPLSSPTKGHNRFSRISIGSKNMLQKEDKSTKSNWFKKFFHSLTTPSTKEQSGNSSSKVASKDIKIIDTSLTAAQLIRVIKYQLELKKIEGSISKVDIDEEFGLISGVIPSKFANGRKLKFKIEVIDLINSSSLHVIKMKGNDKGFQSLVNIVTFIIKKEEQDKICRR.

Disordered regions lie at residues 1-26 (MSTV…SSSM) and 41-69 (RLSQ…KLGR). The Protein kinase domain occupies 65–330 (WKLGRTLGRG…IDAILTHPLL (266 aa)). Residues 71-79 (LGRGSTGRV) and lysine 94 contribute to the ATP site. Aspartate 201 serves as the catalytic Proton acceptor. Disordered regions lie at residues 412–450 (SNSF…HTTV), 471–540 (SAKG…TSVN), 598–637 (ENSK…TWSL), 992–1031 (EDEE…NYDF), 1095–1230 (KETL…QQTK), and 1269–1321 (NRAA…LQKE). Composition is skewed to polar residues over residues 428-440 (PRST…TVTD) and 471-487 (SAKG…PNTP). The segment covering 510–526 (ASRSRNASSRSLKSNSS) has biased composition (low complexity). Residues 527–540 (TGRNGNNASVTSVN) are compositionally biased toward polar residues. The segment covering 610–620 (QLPPPPPPPIE) has biased composition (pro residues). The stretch at 636 to 715 (SLARRERELA…KLQKHQSAHD (80 aa)) forms a coiled coil. A compositionally biased stretch (basic and acidic residues) spans 1095 to 1130 (KETLLKNHSSDEATIEVKEDNNEHDFNDKIKQHYDD). The span at 1131-1153 (NGDSEEDDEDEDEEEEDDDDDDD) shows a compositional bias: acidic residues. Composition is skewed to polar residues over residues 1165–1176 (HNYSLAEITSES), 1197–1218 (STGI…NNGD), and 1292–1302 (NISQPLSSPTK).

It belongs to the protein kinase superfamily. CAMK Ser/Thr protein kinase family. NIM1 subfamily. In terms of processing, phosphorylated throughout the cell cycle, except for the G1 phase.

The protein localises to the bud neck. The catalysed reaction is L-seryl-[protein] + ATP = O-phospho-L-seryl-[protein] + ADP + H(+). The enzyme catalyses L-threonyl-[protein] + ATP = O-phospho-L-threonyl-[protein] + ADP + H(+). Protein kinase involved in determination of morphology during the cell cycle of both yeast-form and hyphal cells via regulation of SWE1 and CDC28. Regulates pseudohypha formation, but is not required for septin ring organization or septum formation. Plays an essential role in virulence in a mouse model. This is Serine/threonine-protein kinase HSL1 (HSL1) from Candida albicans (strain SC5314 / ATCC MYA-2876) (Yeast).